Consider the following 266-residue polypeptide: Large ribosomal subunit protein uL2m (266 aa).

It belongs to the universal ribosomal protein uL2 family.

Its subcellular location is the mitochondrion. This Dictyostelium discoideum (Social amoeba) protein is Large ribosomal subunit protein uL2m (mrpl2).